The primary structure comprises 493 residues: Cytochrome P450 2E1 (493 aa).

Substrate is bound at residue 298-303; sequence FAGTET. C437 provides a ligand contact to heme.

It belongs to the cytochrome P450 family. Interacts with chaperones HSP70 and HSP90; this interaction is required for initial targeting to mitochondria. Requires heme as cofactor.

The protein localises to the endoplasmic reticulum membrane. The protein resides in the microsome membrane. It localises to the mitochondrion inner membrane. The enzyme catalyses an organic molecule + reduced [NADPH--hemoprotein reductase] + O2 = an alcohol + oxidized [NADPH--hemoprotein reductase] + H2O + H(+). The catalysed reaction is (5Z,8Z,11Z)-eicosatrienoate + reduced [NADPH--hemoprotein reductase] + O2 = 19-hydroxy-(5Z,8Z,11Z)-eicosatrienoate + oxidized [NADPH--hemoprotein reductase] + H2O + H(+). It catalyses the reaction (5Z,8Z,11Z,14Z,17Z)-eicosapentaenoate + reduced [NADPH--hemoprotein reductase] + O2 = 19-hydroxy-(5Z,8Z,11Z,14Z,17Z)-eicosapentaenoate + oxidized [NADPH--hemoprotein reductase] + H2O + H(+). It carries out the reaction (4Z,7Z,10Z,13Z,16Z,19Z)-docosahexaenoate + reduced [NADPH--hemoprotein reductase] + O2 = 21-hydroxy-(4Z,7Z,10Z,13Z,16Z,19Z)-docosahexaenoate + oxidized [NADPH--hemoprotein reductase] + H2O + H(+). The enzyme catalyses dodecanoate + reduced [NADPH--hemoprotein reductase] + O2 = 11-hydroxydodecanoate + oxidized [NADPH--hemoprotein reductase] + H2O + H(+). The catalysed reaction is tetradecanoate + reduced [NADPH--hemoprotein reductase] + O2 = 13-hydroxytetradecanoate + oxidized [NADPH--hemoprotein reductase] + H2O + H(+). It catalyses the reaction 4-nitrophenol + NADPH + O2 + H(+) = 4-nitrocatechol + NADP(+) + H2O. It functions in the pathway lipid metabolism; fatty acid metabolism. Its activity is regulated as follows. The omega-1 hydroxylase activity is stimulated by cytochrome b5. Its function is as follows. A cytochrome P450 monooxygenase involved in the metabolism of fatty acids. Mechanistically, uses molecular oxygen inserting one oxygen atom into a substrate, and reducing the second into a water molecule, with two electrons provided by NADPH via cytochrome P450 reductase (NADPH--hemoprotein reductase). Catalyzes the hydroxylation of carbon-hydrogen bonds. Hydroxylates fatty acids specifically at the omega-1 position displaying the highest catalytic activity for saturated fatty acids. May be involved in the oxidative metabolism of xenobiotics. This Mesocricetus auratus (Golden hamster) protein is Cytochrome P450 2E1 (CYP2E1).